Here is a 293-residue protein sequence, read N- to C-terminus: uncharacterized protein (293 aa).

Residue Glu47 is part of the active site.

It belongs to the PhzF family.

This is an uncharacterized protein from Bacillus subtilis (strain 168).